The chain runs to 105 residues: DNA-binding protein HU (105 aa).

Belongs to the bacterial histone-like protein family.

Its function is as follows. Histone-like DNA-binding protein which is capable of wrapping DNA to stabilize it, and thus to prevent its denaturation under extreme environmental conditions. This chain is DNA-binding protein HU (hup), found in Treponema pallidum (strain Nichols).